The chain runs to 105 residues: Small cysteine and glycine repeat-containing protein 6 (105 aa).

Positions 4–83 are 13 X 2 AA repeats of CG; that stretch reads CGCGGCGGGC…HSCGCGCGCG (80 aa).

It belongs to the KRTAP type 28 family.

In the hair cortex, hair keratin intermediate filaments are embedded in an interfilamentous matrix, consisting of hair keratin-associated proteins (KRTAP), which are essential for the formation of a rigid and resistant hair shaft through their extensive disulfide bond cross-linking with abundant cysteine residues of hair keratins. The matrix proteins include the high-sulfur and high-glycine-tyrosine keratins. The sequence is that of Small cysteine and glycine repeat-containing protein 6 from Homo sapiens (Human).